Here is a 216-residue protein sequence, read N- to C-terminus: Ribosomal RNA small subunit methyltransferase G (216 aa).

Residues G81, F86, 130–131 (AE), and R144 contribute to the S-adenosyl-L-methionine site.

Belongs to the methyltransferase superfamily. RNA methyltransferase RsmG family.

It is found in the cytoplasm. It carries out the reaction guanosine(527) in 16S rRNA + S-adenosyl-L-methionine = N(7)-methylguanosine(527) in 16S rRNA + S-adenosyl-L-homocysteine. Its function is as follows. Specifically methylates the N7 position of guanine in position 527 of 16S rRNA. The polypeptide is Ribosomal RNA small subunit methyltransferase G (Rhodospirillum centenum (strain ATCC 51521 / SW)).